We begin with the raw amino-acid sequence, 317 residues long: (R)-citramalyl-CoA lyase (317 aa).

Positions 4-281 (VTIVDVAPRD…PTGIDLSALI (278 aa)) constitute a Pyruvate carboxyltransferase domain. Arginine 12 provides a ligand contact to substrate. A divalent metal cation contacts are provided by aspartate 13, histidine 214, and histidine 216. Residue cysteine 247 is part of the active site. Asparagine 256 is an a divalent metal cation binding site.

This sequence belongs to the HMG-CoA lyase family. Homodimer. It depends on Mn(2+) as a cofactor. The cofactor is Co(2+). Ni(2+) is required as a cofactor. Requires Mg(2+) as cofactor.

The catalysed reaction is (3R)-citramalyl-CoA = pyruvate + acetyl-CoA. With respect to regulation, activated by dithioerythritol (DTE) (in vitro). In terms of biological role, involved in the glyoxylate assimilation cycle used to regenerate acetyl-CoA and produce pyruvate as universal precursor for biosynthesis. Catalyzes the cleavage of (R)-citramalyl-CoA to yield acetyl-CoA and pyruvate. The sequence is that of (R)-citramalyl-CoA lyase (ccl) from Chloroflexus aurantiacus (strain ATCC 29366 / DSM 635 / J-10-fl).